Here is a 576-residue protein sequence, read N- to C-terminus: Formate--tetrahydrofolate ligase (576 aa).

64 to 71 serves as a coordination point for ATP; it reads TPLGEGKT.

This sequence belongs to the formate--tetrahydrofolate ligase family.

It catalyses the reaction (6S)-5,6,7,8-tetrahydrofolate + formate + ATP = (6R)-10-formyltetrahydrofolate + ADP + phosphate. The protein operates within one-carbon metabolism; tetrahydrofolate interconversion. The chain is Formate--tetrahydrofolate ligase from Aeromonas hydrophila subsp. hydrophila (strain ATCC 7966 / DSM 30187 / BCRC 13018 / CCUG 14551 / JCM 1027 / KCTC 2358 / NCIMB 9240 / NCTC 8049).